The following is a 499-amino-acid chain: Maturase K (499 aa).

This sequence belongs to the intron maturase 2 family. MatK subfamily.

It is found in the plastid. Its subcellular location is the chloroplast. Its function is as follows. Usually encoded in the trnK tRNA gene intron. Probably assists in splicing its own and other chloroplast group II introns. This Chamaecrista fasciculata (Showy partridge pea) protein is Maturase K.